Here is a 942-residue protein sequence, read N- to C-terminus: Isoleucine--tRNA ligase (942 aa).

The 'HIGH' region motif lies at 58 to 68; the sequence is PYANGDIHIGH. Glu566 contacts L-isoleucyl-5'-AMP. The 'KMSKS' region motif lies at 607-611; that stretch reads KMSKS. Lys610 is an ATP binding site. Residues Cys905, Cys908, Cys925, and Cys928 each contribute to the Zn(2+) site.

This sequence belongs to the class-I aminoacyl-tRNA synthetase family. IleS type 1 subfamily. Monomer. The cofactor is Zn(2+).

It is found in the cytoplasm. It carries out the reaction tRNA(Ile) + L-isoleucine + ATP = L-isoleucyl-tRNA(Ile) + AMP + diphosphate. In terms of biological role, catalyzes the attachment of isoleucine to tRNA(Ile). As IleRS can inadvertently accommodate and process structurally similar amino acids such as valine, to avoid such errors it has two additional distinct tRNA(Ile)-dependent editing activities. One activity is designated as 'pretransfer' editing and involves the hydrolysis of activated Val-AMP. The other activity is designated 'posttransfer' editing and involves deacylation of mischarged Val-tRNA(Ile). This Pseudoalteromonas atlantica (strain T6c / ATCC BAA-1087) protein is Isoleucine--tRNA ligase.